The following is a 916-amino-acid chain: Protein translocase subunit SecA (916 aa).

ATP-binding positions include Gln86, 104–108 (GEGKT), and Asp494. The interval 859-916 (LEAPEKPAQLQYTAPSEGGGTQTRVETRSTGRSGNPAKAAEQDAAKDAAKRPAKKKRR) is disordered. Polar residues predominate over residues 880 to 891 (QTRVETRSTGRS). Residues 898–908 (AEQDAAKDAAK) show a composition bias toward basic and acidic residues.

Belongs to the SecA family. As to quaternary structure, monomer and homodimer. Part of the essential Sec protein translocation apparatus which comprises SecA, SecYEG and auxiliary proteins SecDF. Other proteins may also be involved.

Its subcellular location is the cell membrane. It localises to the cytoplasm. It catalyses the reaction ATP + H2O + cellular proteinSide 1 = ADP + phosphate + cellular proteinSide 2.. Functionally, part of the Sec protein translocase complex. Interacts with the SecYEG preprotein conducting channel. Has a central role in coupling the hydrolysis of ATP to the transfer of proteins into and across the cell membrane, serving as an ATP-driven molecular motor driving the stepwise translocation of polypeptide chains across the membrane. In Pseudarthrobacter chlorophenolicus (strain ATCC 700700 / DSM 12829 / CIP 107037 / JCM 12360 / KCTC 9906 / NCIMB 13794 / A6) (Arthrobacter chlorophenolicus), this protein is Protein translocase subunit SecA.